The sequence spans 126 residues: MFAVIKTGGRQYRVVPEDVLEVGKIDGDVGSIIQLGEVLVLGGDTPVLGAPTVAGATVAAEVLDHKRGPKVIAFKKRRRKHSKRKRGYRDEITVLRITEILADGKKPSVGPRAKRTKAAPAAEAAE.

Positions 105 to 126 (KKPSVGPRAKRTKAAPAAEAAE) are disordered.

As to quaternary structure, contacts protein L20. Part of the 50S ribosomal subunit.

Its function is as follows. This protein binds to 23S rRNA in the presence of protein L20. The sequence is that of Large ribosomal subunit protein bL21 from Rhodopseudomonas palustris (strain ATCC BAA-98 / CGA009).